The following is a 321-amino-acid chain: MSLQKLMEPEAGTNRTAVAEFILLGLVQTEEMQPVVFVLLLFAYLVTTGGNLSILAAVLVEPKLHAPMYFFLGNLSVLDVGCITVTVPAMLGRLLSHKSTISYDACLSQLFFFHLLAGMDCFLLTAMAYDRLLAICQPLTYSTRMSQTVQRMLVAASWACAFTNALTHTVAMSTLNFCGPNEVNHFYCDLPQLFQLSCSSTQLNELLLFVAAAFMAVAPLVFISVSYAHVVAAVLQIRSAEGRKKAFSTCGSHLTVVGIFYGTGVFSYMRLGSVESSDKDKGVGVFMTVINPMLNPLIYSLRNTDVQGALCQLLVGKRSLT.

At 1–34 the chain is on the extracellular side; that stretch reads MSLQKLMEPEAGTNRTAVAEFILLGLVQTEEMQP. A glycan (N-linked (GlcNAc...) asparagine) is linked at N14. A helical transmembrane segment spans residues 35–58; the sequence is VVFVLLLFAYLVTTGGNLSILAAV. The Cytoplasmic segment spans residues 59 to 66; sequence LVEPKLHA. A helical membrane pass occupies residues 67-88; the sequence is PMYFFLGNLSVLDVGCITVTVP. The Extracellular segment spans residues 89-109; it reads AMLGRLLSHKSTISYDACLSQ. Residues C106 and C198 are joined by a disulfide bond. Residues 110-129 form a helical membrane-spanning segment; that stretch reads LFFFHLLAGMDCFLLTAMAY. The Cytoplasmic portion of the chain corresponds to 130-149; it reads DRLLAICQPLTYSTRMSQTV. The helical transmembrane segment at 150–167 threads the bilayer; the sequence is QRMLVAASWACAFTNALT. The Extracellular portion of the chain corresponds to 168 to 205; that stretch reads HTVAMSTLNFCGPNEVNHFYCDLPQLFQLSCSSTQLNE. A helical membrane pass occupies residues 206-228; that stretch reads LLLFVAAAFMAVAPLVFISVSYA. Topologically, residues 229-245 are cytoplasmic; it reads HVVAAVLQIRSAEGRKK. The helical transmembrane segment at 246–268 threads the bilayer; that stretch reads AFSTCGSHLTVVGIFYGTGVFSY. At 269-281 the chain is on the extracellular side; it reads MRLGSVESSDKDK. The helical transmembrane segment at 282–301 threads the bilayer; the sequence is GVGVFMTVINPMLNPLIYSL. At 302–321 the chain is on the cytoplasmic side; sequence RNTDVQGALCQLLVGKRSLT.

The protein belongs to the G-protein coupled receptor 1 family.

Its subcellular location is the cell membrane. Its function is as follows. Odorant receptor. The chain is Olfactory receptor 3A3 (OR3A3) from Homo sapiens (Human).